Consider the following 419-residue polypeptide: Protein indeterminate-domain 14 (419 aa).

Residues methionine 1–serine 58 form a disordered region. 3 consecutive C2H2-type zinc fingers follow at residues tyrosine 70–histidine 92, tyrosine 112–histidine 142, and tryptophan 148–histidine 175. Residues cysteine 150, cysteine 153, histidine 166, cysteine 170, cysteine 177, cysteine 179, histidine 192, and cysteine 196 each coordinate Zn(2+). The CCHC-type 2; atypical zinc-finger motif lies at histidine 175–valine 198. The interval arginine 185 to threonine 197 is SHR-binding. 2 disordered regions span residues arginine 200–leucine 259 and serine 298–arginine 318. 2 stretches are compositionally biased toward low complexity: residues glutamine 213–asparagine 230 and arginine 246–leucine 259. Residues glutamate 313–alanine 349 adopt a coiled-coil conformation.

Homo- and heterodimer of IDD14alpha and IDD14beta. Expressed in cotyledons and the vasculature of reosette leaves. Weak expression in hypocotyls and floral organs, but not detected in roots and inflorescence stems.

The protein resides in the nucleus. Functionally, transcription factor regulating starch metabolism by binding directly to the promoter of QQS. The IDD14beta isoform attenuates the transcription factor activity by competitively forming heterodimers with reduced DNA-binding capacity. Regulates lateral organ morphogenesis and gravitropic responses. Has a redundant role with IDD16 in directing leaf and floral organ morphogenesis. Involved in the establishment of auxin gradients through the regulation of auxin biosynthesis and transport. In Arabidopsis thaliana (Mouse-ear cress), this protein is Protein indeterminate-domain 14.